Reading from the N-terminus, the 398-residue chain is Carboxyaminopropylagmatine dehydrogenase (398 aa).

This sequence belongs to the saccharopine dehydrogenase family.

It catalyses the reaction N(1)-[(S)-3-amino-3-carboxypropyl]agmatine + NADP(+) + H2O = L-aspartate 4-semialdehyde + agmatine + NADPH + H(+). The protein operates within amine and polyamine biosynthesis; spermidine biosynthesis. Dehydrogenase involved in the biosynthesis of spermidine via the carboxyaminopropylagmatine (CAPA) pathway. Catalyzes the reductive condensation of agmatine and L-aspartate-beta-semialdehyde (ASA) into CAPA. Shows activity toward putrescine and 1,3-diaminopropane, but the catalytic efficiency is three to four orders of magnitude lower than that for agmatine. Cannot use cadaverine or spermidine. This Synechocystis sp. (strain ATCC 27184 / PCC 6803 / Kazusa) protein is Carboxyaminopropylagmatine dehydrogenase.